A 376-amino-acid chain; its full sequence is Transmembrane protein 43 homolog (376 aa).

The Cytoplasmic segment spans residues 1-10 (MASLSETLRS). A helical membrane pass occupies residues 11-31 (HWPIALFGVILFVAGGTELYW). Residues 32 to 277 (NEGRAVHNMM…EVFRLEARAQ (246 aa)) are Lumenal-facing. A helical transmembrane segment spans residues 278–298 (VLHTWWWRFVGWLLIFFGVTC). The Cytoplasmic segment spans residues 299–323 (NTKILRLLFVRVPLLVALAPDPQFP). 2 helical membrane-spanning segments follow: residues 324–344 (VTGN…VAWI) and 345–365 (LHRP…YVWF). The Cytoplasmic segment spans residues 366-376 (TRNLVDYHRLD).

The protein belongs to the TMEM43 family.

The protein resides in the endoplasmic reticulum membrane. Its subcellular location is the nucleus envelope. In terms of biological role, involved in lipid metabolism and utilization. This is Transmembrane protein 43 homolog from Drosophila melanogaster (Fruit fly).